The chain runs to 338 residues: L-asparaginase 1 (338 aa).

An Asparaginase/glutaminase domain is found at 4 to 329; the sequence is KSIYVAYTGG…ETIRKAMSQN (326 aa). Catalysis depends on Thr14, which acts as the O-isoaspartyl threonine intermediate. Substrate is bound by residues 59-61 and 91-92; these read DSS and TD.

It belongs to the asparaginase 1 family. In terms of assembly, homotetramer.

The protein resides in the cytoplasm. It catalyses the reaction L-asparagine + H2O = L-aspartate + NH4(+). The chain is L-asparaginase 1 (ansA) from Escherichia coli O157:H7.